The sequence spans 391 residues: 8-amino-7-oxononanoate synthase (391 aa).

A pyridoxal 5'-phosphate-binding site is contributed by 108–109 (GF). His133 is a substrate binding site. Pyridoxal 5'-phosphate-binding residues include Ser180, His208, and Thr236. Position 239 is an N6-(pyridoxal phosphate)lysine (Lys239). Thr353 is a substrate binding site.

This sequence belongs to the class-II pyridoxal-phosphate-dependent aminotransferase family. BioF subfamily. Homodimer. Pyridoxal 5'-phosphate is required as a cofactor.

The catalysed reaction is 6-carboxyhexanoyl-[ACP] + L-alanine + H(+) = (8S)-8-amino-7-oxononanoate + holo-[ACP] + CO2. It functions in the pathway cofactor biosynthesis; biotin biosynthesis. In terms of biological role, catalyzes the decarboxylative condensation of pimeloyl-[acyl-carrier protein] and L-alanine to produce 8-amino-7-oxononanoate (AON), [acyl-carrier protein], and carbon dioxide. The protein is 8-amino-7-oxononanoate synthase of Thermosipho melanesiensis (strain DSM 12029 / CIP 104789 / BI429).